Consider the following 918-residue polypeptide: GPI ethanolamine phosphate transferase 3 (918 aa).

The helical transmembrane segment at 16-36 threads the bilayer; that stretch reads IGTWKYIQACIFFAIILISNF. 5 N-linked (GlcNAc...) asparagine glycosylation sites follow: asparagine 54, asparagine 71, asparagine 101, asparagine 197, and asparagine 399. Helical transmembrane passes span 429 to 449, 459 to 479, 486 to 506, 523 to 543, 547 to 563, 567 to 587, 616 to 636, 651 to 671, 687 to 707, 715 to 735, 738 to 758, 762 to 782, 813 to 833, 853 to 873, and 887 to 907; these read LFPM…LALL, MSAN…ILIL, SPFP…LNSF, FSIF…FTVW, LCHF…FCKC, MSPL…LQVI, TLIV…ILQL, LSIL…HHVF, SLAN…FFLL, INVI…LSFL, PLGH…IQLK, PSVG…SHFF, IFMF…IPLF, FSFI…AGFF, and FMLS…QCFG.

The protein belongs to the PIGG/PIGN/PIGO family. PIGO subfamily. In terms of processing, glycosylated.

It is found in the endoplasmic reticulum membrane. Its pathway is glycolipid biosynthesis; glycosylphosphatidylinositol-anchor biosynthesis. Its function is as follows. Involved in glycosylphosphatidylinositol-anchor biosynthesis. Transfers ethanolamine phosphate to the GPI third mannose which links the GPI-anchor to the C-terminus of the proteins by an amide bond. Involved in cell wall biosynthesis. This chain is GPI ethanolamine phosphate transferase 3 (gpi13), found in Schizosaccharomyces pombe (strain 972 / ATCC 24843) (Fission yeast).